Consider the following 88-residue polypeptide: Small ribosomal subunit protein bS20 (88 aa).

Residues 1–28 (MANTVQARKRARQAVKQNEHNSSLRSKL) are disordered.

This sequence belongs to the bacterial ribosomal protein bS20 family.

Its function is as follows. Binds directly to 16S ribosomal RNA. This chain is Small ribosomal subunit protein bS20, found in Polynucleobacter necessarius subsp. necessarius (strain STIR1).